We begin with the raw amino-acid sequence, 352 residues long: Outer membrane protein assembly factor BamC (352 aa).

Residues 1 to 19 (MQYWIPKALAVSVLVSLSG) form the signal peptide. Cys-20 carries N-palmitoyl cysteine lipidation. Cys-20 carries S-diacylglycerol cysteine lipidation.

This sequence belongs to the BamC family. In terms of assembly, part of the Bam complex.

Its subcellular location is the cell outer membrane. In terms of biological role, part of the outer membrane protein assembly complex, which is involved in assembly and insertion of beta-barrel proteins into the outer membrane. The chain is Outer membrane protein assembly factor BamC from Pseudoalteromonas sp. (strain SM9913).